The chain runs to 97 residues: Aspartyl/glutamyl-tRNA(Asn/Gln) amidotransferase subunit C (97 aa).

This sequence belongs to the GatC family. In terms of assembly, heterotrimer of A, B and C subunits.

The catalysed reaction is L-glutamyl-tRNA(Gln) + L-glutamine + ATP + H2O = L-glutaminyl-tRNA(Gln) + L-glutamate + ADP + phosphate + H(+). The enzyme catalyses L-aspartyl-tRNA(Asn) + L-glutamine + ATP + H2O = L-asparaginyl-tRNA(Asn) + L-glutamate + ADP + phosphate + 2 H(+). In terms of biological role, allows the formation of correctly charged Asn-tRNA(Asn) or Gln-tRNA(Gln) through the transamidation of misacylated Asp-tRNA(Asn) or Glu-tRNA(Gln) in organisms which lack either or both of asparaginyl-tRNA or glutaminyl-tRNA synthetases. The reaction takes place in the presence of glutamine and ATP through an activated phospho-Asp-tRNA(Asn) or phospho-Glu-tRNA(Gln). This chain is Aspartyl/glutamyl-tRNA(Asn/Gln) amidotransferase subunit C, found in Parasynechococcus marenigrum (strain WH8102).